The primary structure comprises 664 residues: Serine/threonine-protein kinase PknD (664 aa).

At 1 to 381 the chain is on the cytoplasmic side; it reads MSDAVPQVGS…PAGNKRKVWA (381 aa). Residues 15–276 form the Protein kinase domain; the sequence is YQLLRLLGRG…DLAIAAHDAL (262 aa). Residues 21–29 and K44 each bind ATP; that span reads LGRGGMGEV. T135 is subject to Phosphothreonine; by autocatalysis. D138 (proton acceptor) is an active-site residue. Phosphothreonine; by autocatalysis is present on residues T169, T171, T173, and T209. Residues 303-333 form a disordered region; sequence TGLSQSESGIAGAGTGPPTPGAARWSPGDSA. The chain crosses the membrane as a helical span at residues 382 to 402; it reads VVGAAAIVLVAIVAAAGYLVL. Residues 403–664 are Extracellular-facing; it reads RPSWSPTQAS…GNDRVVKLTS (262 aa). 6 NHL repeats span residues 414-456, 457-497, 498-539, 540-581, 582-623, and 624-664; these read QTVL…LATG, STGT…LAAG, SNNQ…LAAG, SKTQ…LEAE, SNNQ…LLAG, and STTS…KLTS.

It belongs to the protein kinase superfamily. Ser/Thr protein kinase family. Homodimer. The extracellular domain interacts with host laminin. In terms of processing, autophosphorylated. Dephosphorylated by PstP.

The protein localises to the cell membrane. It carries out the reaction L-seryl-[protein] + ATP = O-phospho-L-seryl-[protein] + ADP + H(+). The catalysed reaction is L-threonyl-[protein] + ATP = O-phospho-L-threonyl-[protein] + ADP + H(+). Its activity is regulated as follows. Dimerization activates the kinase domain of unphosphorylated PknD via an allosteric mechanism, triggering autophosphorylation and phosphorylation of target proteins. Phosphorylated PknD is fully active even in the absence of dimerization. Part of a signaling pathway that enables adaptation to osmotic stress through cell wall remodeling and virulence factor production. Functionally, key microbial factor required for central nervous system tuberculosis. Required for invasion of host brain endothelia, but not macrophages, lung epithelia or other endothelia. The protein is Serine/threonine-protein kinase PknD (pknD) of Mycobacterium tuberculosis (strain CDC 1551 / Oshkosh).